Here is a 131-residue protein sequence, read N- to C-terminus: Holo-[acyl-carrier-protein] synthase (131 aa).

Aspartate 8 and glutamate 59 together coordinate Mg(2+).

The protein belongs to the P-Pant transferase superfamily. AcpS family. The cofactor is Mg(2+).

Its subcellular location is the cytoplasm. The catalysed reaction is apo-[ACP] + CoA = holo-[ACP] + adenosine 3',5'-bisphosphate + H(+). Transfers the 4'-phosphopantetheine moiety from coenzyme A to a Ser of acyl-carrier-protein. The sequence is that of Holo-[acyl-carrier-protein] synthase from Rickettsia rickettsii (strain Sheila Smith).